We begin with the raw amino-acid sequence, 406 residues long: Oligouridylate-binding protein 1 (406 aa).

RRM domains lie at 49–123 and 134–212; these read RSVY…WAYA and YNIF…WAAK. The disordered stretch occupies residues 231 to 250; the sequence is TSGTSDDGQEKVVNEDAPEN. The RRM 3 domain occupies 255–329; the sequence is TTVYVGNLAP…KPVKCSWGSK (75 aa).

It localises to the nucleus. Heterogeneous nuclear ribonucleoprotein (hnRNP)-like protein that acts as a component of the pre-mRNA processing machinery. Functions to facilitate the nuclear maturation of plant pre-mRNAs. Binds with high affinity to RNA molecules that contain AU-rich regions. May bind to the 3'-UTR and protects the mRNA against exonucleolytic degradation. Associates with nuclear poly(A)+ RNA in nucleus in vivo. Does not stimulate transcription or the 3' end cleavage/polyadenylation reaction. The chain is Oligouridylate-binding protein 1 (UBP1) from Nicotiana plumbaginifolia (Leadwort-leaved tobacco).